The primary structure comprises 166 residues: Large ribosomal subunit protein uL11x (166 aa).

It belongs to the universal ribosomal protein uL11 family.

Its function is as follows. Binds directly to 26S ribosomal RNA. This is Large ribosomal subunit protein uL11x (RPL12C) from Arabidopsis thaliana (Mouse-ear cress).